Reading from the N-terminus, the 143-residue chain is Transcriptional regulator MraZ (143 aa).

2 SpoVT-AbrB domains span residues 5–47 (EYQH…PQDE) and 76–119 (AAEL…STEK).

It belongs to the MraZ family. In terms of assembly, forms oligomers.

It localises to the cytoplasm. It is found in the nucleoid. The sequence is that of Transcriptional regulator MraZ from Syntrophomonas wolfei subsp. wolfei (strain DSM 2245B / Goettingen).